A 108-amino-acid chain; its full sequence is Thiosulfate sulfurtransferase GlpE (108 aa).

The Rhodanese domain occupies 18 to 106 (ENEGATLADI…WERSGLPIET (89 aa)). The active-site Cysteine persulfide intermediate is the Cys-66.

It belongs to the GlpE family.

It is found in the cytoplasm. It catalyses the reaction thiosulfate + hydrogen cyanide = thiocyanate + sulfite + 2 H(+). The catalysed reaction is thiosulfate + [thioredoxin]-dithiol = [thioredoxin]-disulfide + hydrogen sulfide + sulfite + 2 H(+). Transferase that catalyzes the transfer of sulfur from thiosulfate to thiophilic acceptors such as cyanide or dithiols. May function in a CysM-independent thiosulfate assimilation pathway by catalyzing the conversion of thiosulfate to sulfite, which can then be used for L-cysteine biosynthesis. The protein is Thiosulfate sulfurtransferase GlpE of Actinobacillus pleuropneumoniae serotype 3 (strain JL03).